The following is a 239-amino-acid chain: tRNA (guanine-N(7)-)-methyltransferase (239 aa).

S-adenosyl-L-methionine is bound by residues Glu69, Glu94, Asp121, and Asp144. Asp144 is an active-site residue. Substrate contacts are provided by residues Lys148, Asp180, and 217–220; that span reads TKFE.

It belongs to the class I-like SAM-binding methyltransferase superfamily. TrmB family.

The catalysed reaction is guanosine(46) in tRNA + S-adenosyl-L-methionine = N(7)-methylguanosine(46) in tRNA + S-adenosyl-L-homocysteine. Its pathway is tRNA modification; N(7)-methylguanine-tRNA biosynthesis. Its function is as follows. Catalyzes the formation of N(7)-methylguanine at position 46 (m7G46) in tRNA. This Alcanivorax borkumensis (strain ATCC 700651 / DSM 11573 / NCIMB 13689 / SK2) protein is tRNA (guanine-N(7)-)-methyltransferase.